The sequence spans 495 residues: Major facilitator-type transporter hxnP (495 aa).

The segment at 1-24 (MGATATDIEKVPSAGTPDEPKAGE) is disordered. 5 helical membrane-spanning segments follow: residues 36–55 (SFVR…MYFF), 84–104 (LLIL…NLLI), 123–143 (VWGI…LLAI), 145–165 (IILG…FTLF), and 177–197 (VLQS…FGLF). A glycan (N-linked (GlcNAc...) asparagine) is linked at N200. 5 helical membrane passes run 209 to 229 (WLFI…FWWL), 282 to 302 (VITF…PIIV), 314 to 334 (LWTV…AKSS), 341 to 361 (SLHI…LASI), and 368 to 388 (GVSY…TCLV). A glycan (N-linked (GlcNAc...) asparagine) is linked at N395. 2 consecutive transmembrane segments (helical) span residues 404 to 424 (ANTG…AATF) and 436 to 456 (LVAT…MGTW).

The protein belongs to the major facilitator superfamily.

It is found in the cell membrane. Functionally, major facilitator-type transporter, part of the hnx cluster involved in the purine degradation. The nicotinate hydroxylase hnxS accepts nicotinate as a substrate and catalyzes the first step of nicotinate catabolism. The major facilitator-type transporters hxnP and hxnZ are probably involved in the uptake of nicotinate-derived metabolites, and the oxidoreductases hxnT and hxnY in the further metabolism of 6-OH nicotinic acid. The polypeptide is Major facilitator-type transporter hxnP (Emericella nidulans (strain FGSC A4 / ATCC 38163 / CBS 112.46 / NRRL 194 / M139) (Aspergillus nidulans)).